The following is a 341-amino-acid chain: N-acetyl-gamma-glutamyl-phosphate reductase (341 aa).

Residue C147 is part of the active site.

This sequence belongs to the NAGSA dehydrogenase family. Type 1 subfamily.

The protein localises to the cytoplasm. It catalyses the reaction N-acetyl-L-glutamate 5-semialdehyde + phosphate + NADP(+) = N-acetyl-L-glutamyl 5-phosphate + NADPH + H(+). The protein operates within amino-acid biosynthesis; L-arginine biosynthesis; N(2)-acetyl-L-ornithine from L-glutamate: step 3/4. In terms of biological role, catalyzes the NADPH-dependent reduction of N-acetyl-5-glutamyl phosphate to yield N-acetyl-L-glutamate 5-semialdehyde. The polypeptide is N-acetyl-gamma-glutamyl-phosphate reductase (Dehalococcoides mccartyi (strain ATCC BAA-2100 / JCM 16839 / KCTC 5957 / BAV1)).